The primary structure comprises 120 residues: Transcription elongation factor SPT4 (120 aa).

Residues 1 to 39 (MSASVPADLRNLRACLLCSLVKSVESFQKEGCENCEDVL) form an interaction with spt-5 region. The C4-type zinc-finger motif lies at 15–35 (CLLCSLVKSVESFQKEGCENC).

This sequence belongs to the SPT4 family. As to quaternary structure, interacts with spt-5 to form DSIF. DSIF interacts with RNA polymerase II and with the positive transcription elongation factor b complex (P-TEFb complex), which is composed of cdk-9 and cyclin-T (cit-1.1 or cit-1.2).

It is found in the nucleus. May function as a component of the DRB sensitivity-inducing factor complex (DSIF complex), which regulates transcription elongation by RNA polymerase II. DSIF may enhance transcriptional pausing at sites proximal to the promoter, which may in turn facilitate the assembly of an elongation competent RNA polymerase II complex. In Caenorhabditis elegans, this protein is Transcription elongation factor SPT4 (spt-4).